Reading from the N-terminus, the 233-residue chain is Large ribosomal subunit protein uL1 (233 aa).

This sequence belongs to the universal ribosomal protein uL1 family. Part of the 50S ribosomal subunit.

Its function is as follows. Binds directly to 23S rRNA. The L1 stalk is quite mobile in the ribosome, and is involved in E site tRNA release. Functionally, protein L1 is also a translational repressor protein, it controls the translation of the L11 operon by binding to its mRNA. The chain is Large ribosomal subunit protein uL1 from Brucella melitensis biotype 1 (strain ATCC 23456 / CCUG 17765 / NCTC 10094 / 16M).